Here is a 276-residue protein sequence, read N- to C-terminus: Undecaprenyl-diphosphatase (276 aa).

The next 6 helical transmembrane spans lie at 43-63, 85-105, 109-129, 184-204, 218-238, and 254-274; these read RAMAFNIIIQLGAILAVVWEF, INLLIAFLPAVVLGVIFADLI, LFNPITVATALVVGGLIMLWA, ATEFSFFLAMPTMVGAAVYSG, VFAIGFVTAFVFAMIAVKGLL, and IAFGLLILATWQFGWVDWTAA.

This sequence belongs to the UppP family.

It localises to the cell inner membrane. It carries out the reaction di-trans,octa-cis-undecaprenyl diphosphate + H2O = di-trans,octa-cis-undecaprenyl phosphate + phosphate + H(+). Functionally, catalyzes the dephosphorylation of undecaprenyl diphosphate (UPP). Confers resistance to bacitracin. In Pseudomonas fluorescens (strain ATCC BAA-477 / NRRL B-23932 / Pf-5), this protein is Undecaprenyl-diphosphatase.